Here is a 200-residue protein sequence, read N- to C-terminus: Glycerol-3-phosphate acyltransferase (200 aa).

A run of 4 helical transmembrane segments spans residues 4–24 (ALLAVLGGYLLGSIPTGYWVG), 70–90 (ALGSALGSAWWVVLAALFAVI), 110–130 (LGILLAMAWPVALTTFGVWLL), and 158–178 (QPLPYLLFALAGGVYVIGAHR).

The protein belongs to the PlsY family. Probably interacts with PlsX.

The protein resides in the cell inner membrane. It catalyses the reaction an acyl phosphate + sn-glycerol 3-phosphate = a 1-acyl-sn-glycero-3-phosphate + phosphate. The protein operates within lipid metabolism; phospholipid metabolism. Its function is as follows. Catalyzes the transfer of an acyl group from acyl-phosphate (acyl-PO(4)) to glycerol-3-phosphate (G3P) to form lysophosphatidic acid (LPA). This enzyme utilizes acyl-phosphate as fatty acyl donor, but not acyl-CoA or acyl-ACP. The polypeptide is Glycerol-3-phosphate acyltransferase (Synechococcus sp. (strain JA-2-3B'a(2-13)) (Cyanobacteria bacterium Yellowstone B-Prime)).